The sequence spans 290 residues: Small ribosomal subunit biogenesis GTPase RsgA (290 aa).

Residues 62-213 form the CP-type G domain; that stretch reads KNSLVRPPIV…IADTPGFSSL (152 aa). GTP contacts are provided by residues 111 to 114 and 156 to 164; these read SKMD and GQTGVGKST. Residues Cys-237, Cys-242, His-244, and Cys-250 each contribute to the Zn(2+) site.

Belongs to the TRAFAC class YlqF/YawG GTPase family. RsgA subfamily. In terms of assembly, monomer. Associates with 30S ribosomal subunit, binds 16S rRNA. Zn(2+) is required as a cofactor.

The protein localises to the cytoplasm. Functionally, one of several proteins that assist in the late maturation steps of the functional core of the 30S ribosomal subunit. Helps release RbfA from mature subunits. May play a role in the assembly of ribosomal proteins into the subunit. Circularly permuted GTPase that catalyzes slow GTP hydrolysis, GTPase activity is stimulated by the 30S ribosomal subunit. This Streptococcus pyogenes serotype M3 (strain ATCC BAA-595 / MGAS315) protein is Small ribosomal subunit biogenesis GTPase RsgA.